The primary structure comprises 329 residues: DNA-directed RNA polymerase subunit alpha (329 aa).

The interval 1-235 (MQGSVTEFLK…EQLEAFVDLR (235 aa)) is alpha N-terminal domain (alpha-NTD). The segment at 249 to 329 (FDPILLRPVD…NWPPASIADE (81 aa)) is alpha C-terminal domain (alpha-CTD).

This sequence belongs to the RNA polymerase alpha chain family. Homodimer. The RNAP catalytic core consists of 2 alpha, 1 beta, 1 beta' and 1 omega subunit. When a sigma factor is associated with the core the holoenzyme is formed, which can initiate transcription.

The catalysed reaction is RNA(n) + a ribonucleoside 5'-triphosphate = RNA(n+1) + diphosphate. In terms of biological role, DNA-dependent RNA polymerase catalyzes the transcription of DNA into RNA using the four ribonucleoside triphosphates as substrates. The protein is DNA-directed RNA polymerase subunit alpha of Photorhabdus laumondii subsp. laumondii (strain DSM 15139 / CIP 105565 / TT01) (Photorhabdus luminescens subsp. laumondii).